The chain runs to 950 residues: Serine/threonine-protein kinase atg1 (950 aa).

A Protein kinase domain is found at 6–311; the sequence is YTRLDEIGRG…FPDFFENGVI (306 aa). Residues 12-20 and lysine 35 each bind ATP; that span reads IGRGSFATV. Residue aspartate 149 is the Proton acceptor of the active site. 5 disordered regions span residues 314-425, 443-467, 505-570, 671-690, and 926-950; these read PIPG…HATA, RQRG…LREE, QGGI…QSPT, VQTD…NPDS, and PTPS…TPPK. Polar residues-rich tracts occupy residues 370 to 389, 447 to 458, and 511 to 520; these read GLTQ…PTTT, RNTFSEGSPQTD, and GAQTGALSRR. Basic and acidic residues predominate over residues 549–565; that stretch reads SRADSMHNRQSSYERRY.

It belongs to the protein kinase superfamily. Ser/Thr protein kinase family. APG1/unc-51/ULK1 subfamily. Homodimer. Forms a ternary complex with ATG13 and ATG17.

It is found in the cytoplasm. Its subcellular location is the preautophagosomal structure membrane. The catalysed reaction is L-seryl-[protein] + ATP = O-phospho-L-seryl-[protein] + ADP + H(+). It carries out the reaction L-threonyl-[protein] + ATP = O-phospho-L-threonyl-[protein] + ADP + H(+). Serine/threonine protein kinase involved in the cytoplasm to vacuole transport (Cvt) and found to be essential in autophagy, where it is required for the formation of autophagosomes. Involved in the clearance of protein aggregates which cannot be efficiently cleared by the proteasome. Required for selective autophagic degradation of the nucleus (nucleophagy) as well as for mitophagy which contributes to regulate mitochondrial quantity and quality by eliminating the mitochondria to a basal level to fulfill cellular energy requirements and preventing excess ROS production. Also involved in endoplasmic reticulum-specific autophagic process, in selective removal of ER-associated degradation (ERAD) substrates. Plays a key role in ATG9 and ATG23 cycling through the pre-autophagosomal structure and is necessary to promote ATG18 binding to ATG9 through phosphorylation of ATG9. Catalyzes phosphorylation of ATG4, decreasing the interaction between ATG4 and ATG8 and impairing deconjugation of PE-conjugated forms of ATG8. This is Serine/threonine-protein kinase atg1 from Neosartorya fischeri (strain ATCC 1020 / DSM 3700 / CBS 544.65 / FGSC A1164 / JCM 1740 / NRRL 181 / WB 181) (Aspergillus fischerianus).